The sequence spans 377 residues: tRNA-specific 2-thiouridylase MnmA (377 aa).

Residues 9 to 16 (AMSGGVDS) and leucine 35 each bind ATP. The active-site Nucleophile is cysteine 105. The cysteines at positions 105 and 201 are disulfide-linked. Position 129 (glycine 129) interacts with ATP. Residues 151-153 (KNQ) are interaction with tRNA. Catalysis depends on cysteine 201, which acts as the Cysteine persulfide intermediate. The interaction with tRNA stretch occupies residues 307 to 308 (RY).

This sequence belongs to the MnmA/TRMU family.

The protein resides in the cytoplasm. It catalyses the reaction S-sulfanyl-L-cysteinyl-[protein] + uridine(34) in tRNA + AH2 + ATP = 2-thiouridine(34) in tRNA + L-cysteinyl-[protein] + A + AMP + diphosphate + H(+). Its function is as follows. Catalyzes the 2-thiolation of uridine at the wobble position (U34) of tRNA, leading to the formation of s(2)U34. The chain is tRNA-specific 2-thiouridylase MnmA from Leptospira borgpetersenii serovar Hardjo-bovis (strain JB197).